Reading from the N-terminus, the 161-residue chain is Nucleotide-binding protein PBPRA2024 (161 aa).

Belongs to the YajQ family.

Its function is as follows. Nucleotide-binding protein. The polypeptide is Nucleotide-binding protein PBPRA2024 (Photobacterium profundum (strain SS9)).